A 371-amino-acid polypeptide reads, in one-letter code: Queuine tRNA-ribosyltransferase (371 aa).

The Proton acceptor role is filled by Asp90. Substrate is bound by residues 90–94 (DSGGF), Asp144, Gln188, and Gly215. The segment at 246–252 (GVGTPED) is RNA binding. The Nucleophile role is filled by Asp265. An RNA binding; important for wobble base 34 recognition region spans residues 270-274 (TRNAR). Zn(2+) contacts are provided by Cys303, Cys305, Cys308, and His334.

It belongs to the queuine tRNA-ribosyltransferase family. Homodimer. Within each dimer, one monomer is responsible for RNA recognition and catalysis, while the other monomer binds to the replacement base PreQ1. The cofactor is Zn(2+).

It catalyses the reaction 7-aminomethyl-7-carbaguanine + guanosine(34) in tRNA = 7-aminomethyl-7-carbaguanosine(34) in tRNA + guanine. The protein operates within tRNA modification; tRNA-queuosine biosynthesis. Its function is as follows. Catalyzes the base-exchange of a guanine (G) residue with the queuine precursor 7-aminomethyl-7-deazaguanine (PreQ1) at position 34 (anticodon wobble position) in tRNAs with GU(N) anticodons (tRNA-Asp, -Asn, -His and -Tyr). Catalysis occurs through a double-displacement mechanism. The nucleophile active site attacks the C1' of nucleotide 34 to detach the guanine base from the RNA, forming a covalent enzyme-RNA intermediate. The proton acceptor active site deprotonates the incoming PreQ1, allowing a nucleophilic attack on the C1' of the ribose to form the product. After dissociation, two additional enzymatic reactions on the tRNA convert PreQ1 to queuine (Q), resulting in the hypermodified nucleoside queuosine (7-(((4,5-cis-dihydroxy-2-cyclopenten-1-yl)amino)methyl)-7-deazaguanosine). The protein is Queuine tRNA-ribosyltransferase of Neisseria meningitidis serogroup C (strain 053442).